We begin with the raw amino-acid sequence, 36 residues long: Photosystem II reaction center protein M (36 aa).

Residues 5–25 (ILGVIATALFIIIPTSFLLIL) traverse the membrane as a helical segment.

Belongs to the PsbM family. PSII is composed of 1 copy each of membrane proteins PsbA, PsbB, PsbC, PsbD, PsbE, PsbF, PsbH, PsbI, PsbJ, PsbK, PsbL, PsbM, PsbT, PsbX, PsbY, PsbZ, Psb30/Ycf12, at least 3 peripheral proteins of the oxygen-evolving complex and a large number of cofactors. It forms dimeric complexes.

Its subcellular location is the plastid. It localises to the chloroplast thylakoid membrane. Its function is as follows. One of the components of the core complex of photosystem II (PSII). PSII is a light-driven water:plastoquinone oxidoreductase that uses light energy to abstract electrons from H(2)O, generating O(2) and a proton gradient subsequently used for ATP formation. It consists of a core antenna complex that captures photons, and an electron transfer chain that converts photonic excitation into a charge separation. This subunit is found at the monomer-monomer interface. This is Photosystem II reaction center protein M from Chlorella vulgaris (Green alga).